A 570-amino-acid polypeptide reads, in one-letter code: Eukaryotic translation initiation factor 2A (570 aa).

WD repeat units follow at residues 274–316 and 318–358; these read EKKG…FDTI and GPRN…EIIS. Residues 468-526 form a disordered region; it reads PPHLRKPLGGGGSAGPPSAAAPTPGNQNQRPAQPRANGNGNAPQPFRPQQSEQERKAFQ. Over residues 482-492 the composition is skewed to low complexity; that stretch reads GPPSAAAPTPG. Residues 493-518 show a composition bias toward polar residues; the sequence is NQNQRPAQPRANGNGNAPQPFRPQQS. Residues 519-541 adopt a coiled-coil conformation; the sequence is EQERKAFQLKKKVEEIKVLKQRV.

The protein belongs to the WD repeat EIF2A family.

Functions in the early steps of protein synthesis of a small number of specific mRNAs. Acts by directing the binding of methionyl-tRNAi to 40S ribosomal subunits. In contrast to the eIF-2 complex, it binds methionyl-tRNAi to 40S subunits in a codon-dependent manner, whereas the eIF-2 complex binds methionyl-tRNAi to 40S subunits in a GTP-dependent manner. The sequence is that of Eukaryotic translation initiation factor 2A from Caenorhabditis elegans.